Consider the following 458-residue polypeptide: UDP-N-acetylmuramoylalanine--D-glutamate ligase (458 aa).

ATP is bound at residue 124-130 (GSDGKTT).

This sequence belongs to the MurCDEF family.

Its subcellular location is the cytoplasm. The enzyme catalyses UDP-N-acetyl-alpha-D-muramoyl-L-alanine + D-glutamate + ATP = UDP-N-acetyl-alpha-D-muramoyl-L-alanyl-D-glutamate + ADP + phosphate + H(+). It functions in the pathway cell wall biogenesis; peptidoglycan biosynthesis. In terms of biological role, cell wall formation. Catalyzes the addition of glutamate to the nucleotide precursor UDP-N-acetylmuramoyl-L-alanine (UMA). This is UDP-N-acetylmuramoylalanine--D-glutamate ligase from Clostridium botulinum (strain ATCC 19397 / Type A).